A 546-amino-acid chain; its full sequence is Cytochrome P450 monooxygenase 219 (546 aa).

Positions 1–22 (MATLIVLLYGLLAFGTVWLVRR) are cleaved as a signal peptide. Residues asparagine 367 and asparagine 441 are each glycosylated (N-linked (GlcNAc...) asparagine). Cysteine 487 contacts heme.

This sequence belongs to the cytochrome P450 family. Heme is required as a cofactor.

It functions in the pathway secondary metabolite biosynthesis. Cytochrome P450 monooxygenase that is able to use testosterone, anthracene, carbazole, pyrene, phenanthrene and trans-stilbene as substrates for oxidation. These multifunctional properties against a series of polycyclic aromatic hydrocarbons (PAHs) suggest that CYP219 would play important roles, at least in part, in fungal metabolic systems involved in xenobiotic detoxification. The chain is Cytochrome P450 monooxygenase 219 from Postia placenta (strain ATCC 44394 / Madison 698-R) (Brown rot fungus).